The primary structure comprises 359 residues: UDP-3-O-acylglucosamine N-acyltransferase (359 aa).

H256 (proton acceptor) is an active-site residue.

Belongs to the transferase hexapeptide repeat family. LpxD subfamily. Homotrimer.

The enzyme catalyses a UDP-3-O-[(3R)-3-hydroxyacyl]-alpha-D-glucosamine + a (3R)-hydroxyacyl-[ACP] = a UDP-2-N,3-O-bis[(3R)-3-hydroxyacyl]-alpha-D-glucosamine + holo-[ACP] + H(+). Its pathway is bacterial outer membrane biogenesis; LPS lipid A biosynthesis. In terms of biological role, catalyzes the N-acylation of UDP-3-O-acylglucosamine using 3-hydroxyacyl-ACP as the acyl donor. Is involved in the biosynthesis of lipid A, a phosphorylated glycolipid that anchors the lipopolysaccharide to the outer membrane of the cell. The chain is UDP-3-O-acylglucosamine N-acyltransferase from Rhodopseudomonas palustris (strain HaA2).